Reading from the N-terminus, the 212-residue chain is MKLDDIRREYLYAGLSRKDLADDPIVQFKNWLQTAIDADLNADPTAMSLATVNAQGVPSQRIVLLKNLDPSGFVFYTNLGSRKAQNIAENANVSLHFAWLPMERQICVTGVAEKLSIAEATRYFLSRPHESQVAAWASQQSQGIGSRKLLEQAFEQMKNRFKQGEVPLPSFWGGYRVKPVTIEFWQGRANRLHDRFLYKKTDENWEIERLQP.

Residues 7–10 (RREY) and lysine 66 contribute to the substrate site. FMN-binding positions include 61–66 (RIVLLK), 76–77 (YT), arginine 82, lysine 83, and glutamine 105. Tyrosine 123, arginine 127, and serine 131 together coordinate substrate. FMN contacts are provided by residues 140–141 (QS) and tryptophan 185. 191 to 193 (RLH) is a binding site for substrate. Arginine 195 is a binding site for FMN.

The protein belongs to the pyridoxamine 5'-phosphate oxidase family. In terms of assembly, homodimer. FMN serves as cofactor.

It catalyses the reaction pyridoxamine 5'-phosphate + O2 + H2O = pyridoxal 5'-phosphate + H2O2 + NH4(+). The enzyme catalyses pyridoxine 5'-phosphate + O2 = pyridoxal 5'-phosphate + H2O2. It participates in cofactor metabolism; pyridoxal 5'-phosphate salvage; pyridoxal 5'-phosphate from pyridoxamine 5'-phosphate: step 1/1. Its pathway is cofactor metabolism; pyridoxal 5'-phosphate salvage; pyridoxal 5'-phosphate from pyridoxine 5'-phosphate: step 1/1. Functionally, catalyzes the oxidation of either pyridoxine 5'-phosphate (PNP) or pyridoxamine 5'-phosphate (PMP) into pyridoxal 5'-phosphate (PLP). This is Pyridoxine/pyridoxamine 5'-phosphate oxidase from Hahella chejuensis (strain KCTC 2396).